A 1028-amino-acid chain; its full sequence is Carbamoyl phosphate synthase large chain (1028 aa).

Residues 1 to 409 (MPPRRDLKKI…ALMKALRGLE (409 aa)) form a carboxyphosphate synthetic domain region. Positions 129, 169, 175, 176, 208, 210, 215, 241, 242, 243, 285, and 299 each coordinate ATP. The 196-residue stretch at 133–328 (QEAMQRIGLE…IAKIAALLAV (196 aa)) folds into the ATP-grasp 1 domain. Residues Gln-285, Glu-299, and Asn-301 each coordinate Mg(2+). Mn(2+) is bound by residues Gln-285, Glu-299, and Asn-301. The tract at residues 410 to 549 (RDVRALAGVR…YSTYELEDEV (140 aa)) is oligomerization domain. Positions 550–933 (WPSQKPKVVI…AYYKAELGAG (384 aa)) are carbamoyl phosphate synthetic domain. The ATP-grasp 2 domain occupies 674 to 866 (HALCQRLGIP…LAKLAALIAV (193 aa)). ATP-binding residues include Arg-710, Arg-750, Leu-752, Glu-757, Gly-782, Val-783, His-784, Ser-785, Gln-825, and Glu-837. Mg(2+)-binding residues include Gln-825, Glu-837, and Asn-839. Residues Gln-825, Glu-837, and Asn-839 each coordinate Mn(2+). The region spanning 934-1028 (QRLPLSGRVR…QDWHQKAPRG (95 aa)) is the MGS-like domain. The tract at residues 934-1028 (QRLPLSGRVR…QDWHQKAPRG (95 aa)) is allosteric domain.

This sequence belongs to the CarB family. As to quaternary structure, composed of two chains; the small (or glutamine) chain promotes the hydrolysis of glutamine to ammonia, which is used by the large (or ammonia) chain to synthesize carbamoyl phosphate. Tetramer of heterodimers (alpha,beta)4. Mg(2+) is required as a cofactor. The cofactor is Mn(2+).

The catalysed reaction is hydrogencarbonate + L-glutamine + 2 ATP + H2O = carbamoyl phosphate + L-glutamate + 2 ADP + phosphate + 2 H(+). It catalyses the reaction hydrogencarbonate + NH4(+) + 2 ATP = carbamoyl phosphate + 2 ADP + phosphate + 2 H(+). The protein operates within amino-acid biosynthesis; L-arginine biosynthesis; carbamoyl phosphate from bicarbonate: step 1/1. It functions in the pathway pyrimidine metabolism; UMP biosynthesis via de novo pathway; (S)-dihydroorotate from bicarbonate: step 1/3. Functionally, large subunit of the glutamine-dependent carbamoyl phosphate synthetase (CPSase). CPSase catalyzes the formation of carbamoyl phosphate from the ammonia moiety of glutamine, carbonate, and phosphate donated by ATP, constituting the first step of 2 biosynthetic pathways, one leading to arginine and/or urea and the other to pyrimidine nucleotides. The large subunit (synthetase) binds the substrates ammonia (free or transferred from glutamine from the small subunit), hydrogencarbonate and ATP and carries out an ATP-coupled ligase reaction, activating hydrogencarbonate by forming carboxy phosphate which reacts with ammonia to form carbamoyl phosphate. This Thermus thermophilus (strain ATCC 27634 / DSM 579 / HB8) protein is Carbamoyl phosphate synthase large chain.